Consider the following 502-residue polypeptide: uncharacterized protein (502 aa).

A helical transmembrane segment spans residues 1-21; that stretch reads MKIFLVILSVFFFNGCFGLAY. PLD phosphodiesterase domains follow at residues 162 to 189 and 396 to 423; these read IKKRMHNKLFIVDNFAVIIGGRNIGDNY and TKHSLHGKTIVFDDALTLLGSFNIDPRS.

Belongs to the phospholipase D family. Cardiolipin synthase subfamily.

It localises to the cell membrane. This is an uncharacterized protein from Helicobacter pylori (strain J99 / ATCC 700824) (Campylobacter pylori J99).